The sequence spans 521 residues: Maturase K (521 aa).

The protein belongs to the intron maturase 2 family. MatK subfamily.

It is found in the plastid. It localises to the chloroplast. Usually encoded in the trnK tRNA gene intron. Probably assists in splicing its own and other chloroplast group II introns. The protein is Maturase K of Trillium catesbaei (Catesby's trillium).